Reading from the N-terminus, the 384-residue chain is Galactokinase (384 aa).

34–37 (EHTD) serves as a coordination point for substrate. 123 to 129 (SSGLSSS) is an ATP binding site. The Mg(2+) site is built by S129 and E161. Catalysis depends on D173, which acts as the Proton acceptor. Position 222 (Y222) interacts with substrate.

This sequence belongs to the GHMP kinase family. GalK subfamily.

Its subcellular location is the cytoplasm. The catalysed reaction is alpha-D-galactose + ATP = alpha-D-galactose 1-phosphate + ADP + H(+). The protein operates within carbohydrate metabolism; galactose metabolism. Catalyzes the transfer of the gamma-phosphate of ATP to D-galactose to form alpha-D-galactose-1-phosphate (Gal-1-P). This chain is Galactokinase, found in Actinobacillus pleuropneumoniae (Haemophilus pleuropneumoniae).